Here is a 271-residue protein sequence, read N- to C-terminus: Acetylglutamate kinase (271 aa).

Substrate is bound by residues 41–42 (GG), Arg63, and Asn166.

The protein belongs to the acetylglutamate kinase family. ArgB subfamily.

It localises to the cytoplasm. It catalyses the reaction N-acetyl-L-glutamate + ATP = N-acetyl-L-glutamyl 5-phosphate + ADP. It functions in the pathway amino-acid biosynthesis; L-arginine biosynthesis; N(2)-acetyl-L-ornithine from L-glutamate: step 2/4. In terms of biological role, catalyzes the ATP-dependent phosphorylation of N-acetyl-L-glutamate. The chain is Acetylglutamate kinase from Anaeromyxobacter sp. (strain Fw109-5).